Reading from the N-terminus, the 122-residue chain is MKKEEIIQAIKEMTVLELNELVEACEEEFGVSAAAPVAVAGAGAAAAGAAEEKTEFDVVLADAGSEKIKVIKAVREVTGLGLKEAKALVDGAPKTLKEAASKEDGEAIKAKLEEVGAKVELK.

This sequence belongs to the bacterial ribosomal protein bL12 family. As to quaternary structure, homodimer. Part of the ribosomal stalk of the 50S ribosomal subunit. Forms a multimeric L10(L12)X complex, where L10 forms an elongated spine to which 2 to 4 L12 dimers bind in a sequential fashion. Binds GTP-bound translation factors.

In terms of biological role, forms part of the ribosomal stalk which helps the ribosome interact with GTP-bound translation factors. Is thus essential for accurate translation. This chain is Large ribosomal subunit protein bL12, found in Clostridium botulinum (strain 657 / Type Ba4).